Consider the following 141-residue polypeptide: Large ribosomal subunit protein uL11 (141 aa).

It belongs to the universal ribosomal protein uL11 family. As to quaternary structure, part of the ribosomal stalk of the 50S ribosomal subunit. Interacts with L10 and the large rRNA to form the base of the stalk. L10 forms an elongated spine to which L12 dimers bind in a sequential fashion forming a multimeric L10(L12)X complex. One or more lysine residues are methylated.

Its function is as follows. Forms part of the ribosomal stalk which helps the ribosome interact with GTP-bound translation factors. The polypeptide is Large ribosomal subunit protein uL11 (Chlamydia caviae (strain ATCC VR-813 / DSM 19441 / 03DC25 / GPIC) (Chlamydophila caviae)).